Here is a 376-residue protein sequence, read N- to C-terminus: Queuine tRNA-ribosyltransferase (376 aa).

Asp90 serves as the catalytic Proton acceptor. Substrate-binding positions include 90–94 (DSGGF), Asp144, Gln193, and Gly220. Residues 251–257 (GVGTPED) form an RNA binding region. Asp270 (nucleophile) is an active-site residue. The tract at residues 275-279 (TRNAR) is RNA binding; important for wobble base 34 recognition. Cys308, Cys310, Cys313, and His339 together coordinate Zn(2+).

It belongs to the queuine tRNA-ribosyltransferase family. As to quaternary structure, homodimer. Within each dimer, one monomer is responsible for RNA recognition and catalysis, while the other monomer binds to the replacement base PreQ1. Requires Zn(2+) as cofactor.

The enzyme catalyses 7-aminomethyl-7-carbaguanine + guanosine(34) in tRNA = 7-aminomethyl-7-carbaguanosine(34) in tRNA + guanine. It functions in the pathway tRNA modification; tRNA-queuosine biosynthesis. Catalyzes the base-exchange of a guanine (G) residue with the queuine precursor 7-aminomethyl-7-deazaguanine (PreQ1) at position 34 (anticodon wobble position) in tRNAs with GU(N) anticodons (tRNA-Asp, -Asn, -His and -Tyr). Catalysis occurs through a double-displacement mechanism. The nucleophile active site attacks the C1' of nucleotide 34 to detach the guanine base from the RNA, forming a covalent enzyme-RNA intermediate. The proton acceptor active site deprotonates the incoming PreQ1, allowing a nucleophilic attack on the C1' of the ribose to form the product. After dissociation, two additional enzymatic reactions on the tRNA convert PreQ1 to queuine (Q), resulting in the hypermodified nucleoside queuosine (7-(((4,5-cis-dihydroxy-2-cyclopenten-1-yl)amino)methyl)-7-deazaguanosine). This chain is Queuine tRNA-ribosyltransferase, found in Cupriavidus metallidurans (strain ATCC 43123 / DSM 2839 / NBRC 102507 / CH34) (Ralstonia metallidurans).